The primary structure comprises 597 residues: Elongation factor 4 (597 aa).

The region spanning aspartate 2 to lysine 184 is the tr-type G domain. GTP is bound by residues aspartate 14–threonine 19 and asparagine 131–aspartate 134.

It belongs to the TRAFAC class translation factor GTPase superfamily. Classic translation factor GTPase family. LepA subfamily.

It localises to the cell inner membrane. The catalysed reaction is GTP + H2O = GDP + phosphate + H(+). In terms of biological role, required for accurate and efficient protein synthesis under certain stress conditions. May act as a fidelity factor of the translation reaction, by catalyzing a one-codon backward translocation of tRNAs on improperly translocated ribosomes. Back-translocation proceeds from a post-translocation (POST) complex to a pre-translocation (PRE) complex, thus giving elongation factor G a second chance to translocate the tRNAs correctly. Binds to ribosomes in a GTP-dependent manner. The chain is Elongation factor 4 from Paraburkholderia xenovorans (strain LB400).